Here is a 160-residue protein sequence, read N- to C-terminus: MGKSRGYRSGTRYAFQRDFKKHGAIPLSTYLKVYKVGDIVDIKANGSIQKGMPHKYYHGKTGIVYNVTKSSVGVIINKVVGNRYIEKRVNLRVEHVKHSACRQEFLNRVKSNAAKKREAKANGETVYLKRQAAKPRGSRIISTEGNIPQTLAPVAYETFI.

It belongs to the eukaryotic ribosomal protein eL21 family. In terms of assembly, component of the large ribosomal subunit. Mature ribosomes consist of a small (40S) and a large (60S) subunit. The 40S subunit contains about 32 different proteins and 1 molecule of RNA (18S). The 60S subunit contains 45 different proteins and 3 molecules of RNA (25S, 5.8S and 5S).

It is found in the cytoplasm. Component of the ribosome, a large ribonucleoprotein complex responsible for the synthesis of proteins in the cell. The small ribosomal subunit (SSU) binds messenger RNAs (mRNAs) and translates the encoded message by selecting cognate aminoacyl-transfer RNA (tRNA) molecules. The large subunit (LSU) contains the ribosomal catalytic site termed the peptidyl transferase center (PTC), which catalyzes the formation of peptide bonds, thereby polymerizing the amino acids delivered by tRNAs into a polypeptide chain. The nascent polypeptides leave the ribosome through a tunnel in the LSU and interact with protein factors that function in enzymatic processing, targeting, and the membrane insertion of nascent chains at the exit of the ribosomal tunnel. This chain is Large ribosomal subunit protein eL21, found in Candida albicans (strain SC5314 / ATCC MYA-2876) (Yeast).